The following is a 385-amino-acid chain: Uroporphyrinogen decarboxylase (385 aa).

Substrate is bound by residues Arg53 to Arg57, Asp102, Tyr179, Ser234, and His363.

This sequence belongs to the uroporphyrinogen decarboxylase family. As to quaternary structure, homodimer.

Its subcellular location is the cytoplasm. The catalysed reaction is uroporphyrinogen III + 4 H(+) = coproporphyrinogen III + 4 CO2. Its pathway is porphyrin-containing compound metabolism; protoporphyrin-IX biosynthesis; coproporphyrinogen-III from 5-aminolevulinate: step 4/4. Its function is as follows. Catalyzes the decarboxylation of four acetate groups of uroporphyrinogen-III to yield coproporphyrinogen-III. The chain is Uroporphyrinogen decarboxylase from Tropheryma whipplei (strain TW08/27) (Whipple's bacillus).